The sequence spans 379 residues: Tubby-like F-box protein 7 (379 aa).

The segment covering 18-28 (FHQGETTTAPE) has biased composition (polar residues). The tract at residues 18–41 (FHQGETTTAPESESIPPPSNMAGS) is disordered. Residues 42 to 97 (SSWSAMLPELLGEIIRRVEETEDRWPQRRDVVTCACVSKKWREITHDFARSSLNSG) enclose the F-box domain. 2 disordered regions span residues 193 to 212 (SQPPHNGAKPSNGKASRRFA) and 248 to 278 (TLRCPSPSPSSSSAGLSSDQKPCDVTKIMKK).

The protein belongs to the TUB family. In terms of tissue distribution, ubiquitous.

The polypeptide is Tubby-like F-box protein 7 (Arabidopsis thaliana (Mouse-ear cress)).